A 639-amino-acid polypeptide reads, in one-letter code: Protein sly1 (639 aa).

This sequence belongs to the STXBP/unc-18/SEC1 family.

It is found in the cytoplasm. The polypeptide is Protein sly1 (sly1) (Schizosaccharomyces pombe (strain 972 / ATCC 24843) (Fission yeast)).